Reading from the N-terminus, the 322-residue chain is Epiphycan (322 aa).

The N-terminal stretch at 1–19 is a signal peptide; sequence MKTLAGLVLGLVIFDAAVT. O-linked (GalNAc...) threonine glycosylation is present at threonine 60. Serine 64 is a glycosylation site (O-linked (Xyl...) (dermatan sulfate) serine). Positions 64-101 are disordered; that stretch reads SGNRELLTPPPQPEKAQEEEEEEESTPRLIDGSSPQEP. Residue serine 96 is glycosylated (O-linked (GalNAc...) serine). The 38-residue stretch at 106–143 folds into the LRRNT domain; sequence VLGPHTNEDFPTCLLCTCISTTVYCDDHELDAIPPLPK. A disulfide bridge connects residues cysteine 118 and cysteine 130. LRR repeat units lie at residues 144 to 165, 168 to 189, 192 to 213, 238 to 258, and 259 to 280; these read NTAY…DFAS, DLKR…AFRK, QLRE…PTTL, DLHH…PLPE, and NLRA…TFCN. Cysteine 279 and cysteine 312 form a disulfide bridge. N-linked (GlcNAc...) asparagine glycosylation is found at asparagine 283 and asparagine 302. The LRR 6 repeat unit spans residues 290 to 310; that stretch reads ALEDIRLDGNPINLSKTPQAY.

This sequence belongs to the small leucine-rich proteoglycan (SLRP) family. SLRP class III subfamily. The O-linked polysaccharides on Thr-60 and Ser-96 are probably the mucin type linked to GalNAc. There is one glycosaminoglycan chain, known to be dermatan sulfate, and it is probably the O-glycosylation at Ser-64. In terms of tissue distribution, cartilage, ligament, and placenta.

Its subcellular location is the secreted. The protein resides in the extracellular space. It is found in the extracellular matrix. Functionally, may have a role in bone formation and also in establishing the ordered structure of cartilage through matrix organization. This chain is Epiphycan (EPYC), found in Homo sapiens (Human).